The sequence spans 114 residues: T cell receptor beta variable 9 (114 aa).

The first 21 residues, 1 to 21, serve as a signal peptide directing secretion; that stretch reads MGFRLLCCVAFCLLGAGPVDS. Residues 22 to 114 form the Ig-like domain; that stretch reads GVTQTPKHLI…SALYFCASSV (93 aa). A disulfide bond links Cys-42 and Cys-110. Asn-96 is a glycosylation site (N-linked (GlcNAc...) asparagine).

In terms of assembly, alpha-beta TR is a heterodimer composed of an alpha and beta chain; disulfide-linked. The alpha-beta TR is associated with the transmembrane signaling CD3 coreceptor proteins to form the TR-CD3 (TcR or TCR). The assembly of alpha-beta TR heterodimers with CD3 occurs in the endoplasmic reticulum where a single alpha-beta TR heterodimer associates with one CD3D-CD3E heterodimer, one CD3G-CD3E heterodimer and one CD247 homodimer forming a stable octameric structure. CD3D-CD3E and CD3G-CD3E heterodimers preferentially associate with TR alpha and TR beta chains, respectively. The association of the CD247 homodimer is the last step of TcR assembly in the endoplasmic reticulum and is required for transport to the cell surface.

The protein localises to the cell membrane. Functionally, v region of the variable domain of T cell receptor (TR) beta chain that participates in the antigen recognition. Alpha-beta T cell receptors are antigen specific receptors which are essential to the immune response and are present on the cell surface of T lymphocytes. Recognize peptide-major histocompatibility (MH) (pMH) complexes that are displayed by antigen presenting cells (APC), a prerequisite for efficient T cell adaptive immunity against pathogens. Binding of alpha-beta TR to pMH complex initiates TR-CD3 clustering on the cell surface and intracellular activation of LCK that phosphorylates the ITAM motifs of CD3G, CD3D, CD3E and CD247 enabling the recruitment of ZAP70. In turn ZAP70 phosphorylates LAT, which recruits numerous signaling molecules to form the LAT signalosome. The LAT signalosome propagates signal branching to three major signaling pathways, the calcium, the mitogen-activated protein kinase (MAPK) kinase and the nuclear factor NF-kappa-B (NF-kB) pathways, leading to the mobilization of transcription factors that are critical for gene expression and essential for T cell growth and differentiation. The T cell repertoire is generated in the thymus, by V-(D)-J rearrangement. This repertoire is then shaped by intrathymic selection events to generate a peripheral T cell pool of self-MH restricted, non-autoaggressive T cells. Post-thymic interaction of alpha-beta TR with the pMH complexes shapes TR structural and functional avidity. The protein is T cell receptor beta variable 9 of Homo sapiens (Human).